The primary structure comprises 304 residues: Recombination-associated protein RdgC (304 aa).

This sequence belongs to the RdgC family.

The protein localises to the cytoplasm. The protein resides in the nucleoid. In terms of biological role, may be involved in recombination. The chain is Recombination-associated protein RdgC from Shewanella baltica (strain OS195).